A 140-amino-acid polypeptide reads, in one-letter code: Bacilliredoxin STH2395 (140 aa).

The protein belongs to the bacilliredoxin family.

The polypeptide is Bacilliredoxin STH2395 (Symbiobacterium thermophilum (strain DSM 24528 / JCM 14929 / IAM 14863 / T)).